Here is a 416-residue protein sequence, read N- to C-terminus: MNKQSWLLNLSLLKTHPAFRAVFLARFISIVSLGLLGVAVPVQIQMMTHSTWQVGLSVTLTGGAMFVGLMVGGVLADRYERKKVILLARGTCGIGFIGLCLNALLPEPSLLAIYLLGLWDGFFASLGVTALLAATPALVGRENLMQAGAITMLTVRLGSVISPMIGGLLLATGGVAWNYGLAAAGTFITLLPLLSLPALPPPPQPREHPLKSLLAGFRFLLASPLVGGIALLGGLLTMASAVRVLYPALADNWQMSAAQIGFLYAAIPLGAAIGALTSGKLAHSVRPGLLMLLSTLGAFLAISLFGLMPMWILGVVCLALFGWLSAVSSLLQYTMLQTQTPEAMLGRINGLWTAQNVTGDAIGAALLGGLGAMMTPVASASASGFGLLIIGVLLLLVLVELRRFRQTPPQVTASDS.

Residues 1 to 21 (MNKQSWLLNLSLLKTHPAFRA) lie on the Cytoplasmic side of the membrane. The helical transmembrane segment at 22–42 (VFLARFISIVSLGLLGVAVPV) threads the bilayer. The Periplasmic portion of the chain corresponds to 43–55 (QIQMMTHSTWQVG). Residues 56–76 (LSVTLTGGAMFVGLMVGGVLA) traverse the membrane as a helical segment. Topologically, residues 77 to 83 (DRYERKK) are cytoplasmic. The helical transmembrane segment at 84-104 (VILLARGTCGIGFIGLCLNAL) threads the bilayer. Topologically, residues 105–109 (LPEPS) are periplasmic. The chain crosses the membrane as a helical span at residues 110–130 (LLAIYLLGLWDGFFASLGVTA). At 131–156 (LLAATPALVGRENLMQAGAITMLTVR) the chain is on the cytoplasmic side. Residues 157-177 (LGSVISPMIGGLLLATGGVAW) form a helical membrane-spanning segment. Position 178 (Asn178) is a topological domain, periplasmic. The chain crosses the membrane as a helical span at residues 179-199 (YGLAAAGTFITLLPLLSLPAL). The Cytoplasmic portion of the chain corresponds to 200 to 218 (PPPPQPREHPLKSLLAGFR). A helical membrane pass occupies residues 219-239 (FLLASPLVGGIALLGGLLTMA). At 240–256 (SAVRVLYPALADNWQMS) the chain is on the periplasmic side. A helical transmembrane segment spans residues 257–277 (AAQIGFLYAAIPLGAAIGALT). Topologically, residues 278–287 (SGKLAHSVRP) are cytoplasmic. The helical transmembrane segment at 288 to 307 (GLLMLLSTLGAFLAISLFGL) threads the bilayer. The Periplasmic portion of the chain corresponds to 308-313 (MPMWIL). A helical transmembrane segment spans residues 314-336 (GVVCLALFGWLSAVSSLLQYTML). Over 337 to 356 (QTQTPEAMLGRINGLWTAQN) the chain is Cytoplasmic. A helical transmembrane segment spans residues 357 to 377 (VTGDAIGAALLGGLGAMMTPV). A topological domain (periplasmic) is located at residue Ala378. A helical transmembrane segment spans residues 379–399 (SASASGFGLLIIGVLLLLVLV). The Cytoplasmic segment spans residues 400–416 (ELRRFRQTPPQVTASDS).

The protein belongs to the major facilitator superfamily. EntS (TC 2.A.1.38) family.

It localises to the cell inner membrane. Functionally, component of an export pathway for enterobactin. The polypeptide is Enterobactin exporter EntS (Escherichia coli O45:K1 (strain S88 / ExPEC)).